The following is a 163-amino-acid chain: Cytochrome c-type biogenesis protein CcmE (163 aa).

At 1 to 8 (MNPRRKKR) the chain is on the cytoplasmic side. Residues 9–29 (LTLAVALIVGVAGAASLLLYA) form a helical; Signal-anchor for type II membrane protein membrane-spanning segment. The Periplasmic segment spans residues 30–163 (LNSNLNLFYT…QEGVEKTAQY (134 aa)). Positions 131 and 135 each coordinate heme.

Belongs to the CcmE/CycJ family.

It localises to the cell inner membrane. In terms of biological role, heme chaperone required for the biogenesis of c-type cytochromes. Transiently binds heme delivered by CcmC and transfers the heme to apo-cytochromes in a process facilitated by CcmF and CcmH. This chain is Cytochrome c-type biogenesis protein CcmE, found in Shewanella denitrificans (strain OS217 / ATCC BAA-1090 / DSM 15013).